A 73-amino-acid chain; its full sequence is MLVLSRKIGQSIIIGNDIEIKILKIDGGEIKIGIEAPKDVKVLRKELYEELLKENKEAVKFDIKNLPGFFKKK.

It belongs to the CsrA/RsmA family. Homodimer; the beta-strands of each monomer intercalate to form a hydrophobic core, while the alpha-helices form wings that extend away from the core.

The protein localises to the cytoplasm. Its function is as follows. A translational regulator that binds mRNA to regulate translation initiation and/or mRNA stability. Usually binds in the 5'-UTR at or near the Shine-Dalgarno sequence preventing ribosome-binding, thus repressing translation. Its main target seems to be the major flagellin gene, while its function is anatagonized by FliW. This chain is Translational regulator CsrA, found in Thermosipho africanus (strain TCF52B).